Here is a 303-residue protein sequence, read N- to C-terminus: Hydroxyacylglutathione hydrolase, mitochondrial (303 aa).

Zn(2+) is bound by residues histidine 97, histidine 99, aspartate 101, histidine 102, histidine 153, and aspartate 177. Residues 186–188 (KFF), 216–218 (HEY), and 292–295 (RKEK) each bind substrate. Histidine 216 contributes to the Zn(2+) binding site.

Belongs to the metallo-beta-lactamase superfamily. Glyoxalase II family. Monomer. It depends on Zn(2+) as a cofactor.

The protein localises to the mitochondrion matrix. The protein resides in the cytoplasm. The enzyme catalyses an S-(2-hydroxyacyl)glutathione + H2O = a 2-hydroxy carboxylate + glutathione + H(+). It carries out the reaction (R)-S-lactoylglutathione + H2O = (R)-lactate + glutathione + H(+). Thiolesterase that catalyzes the hydrolysis of S-D-lactoyl-glutathione to form glutathione and D-lactic acid. The chain is Hydroxyacylglutathione hydrolase, mitochondrial (hagh) from Danio rerio (Zebrafish).